Reading from the N-terminus, the 206-residue chain is UPF0301 protein Msil_1255 (206 aa).

Belongs to the UPF0301 (AlgH) family.

The sequence is that of UPF0301 protein Msil_1255 from Methylocella silvestris (strain DSM 15510 / CIP 108128 / LMG 27833 / NCIMB 13906 / BL2).